We begin with the raw amino-acid sequence, 354 residues long: Uroporphyrinogen decarboxylase (354 aa).

Substrate contacts are provided by residues 27-31 (RQAGR), D77, Y154, T209, and H327.

This sequence belongs to the uroporphyrinogen decarboxylase family. Homodimer.

Its subcellular location is the cytoplasm. The enzyme catalyses uroporphyrinogen III + 4 H(+) = coproporphyrinogen III + 4 CO2. Its pathway is porphyrin-containing compound metabolism; protoporphyrin-IX biosynthesis; coproporphyrinogen-III from 5-aminolevulinate: step 4/4. In terms of biological role, catalyzes the decarboxylation of four acetate groups of uroporphyrinogen-III to yield coproporphyrinogen-III. This chain is Uroporphyrinogen decarboxylase, found in Escherichia coli O7:K1 (strain IAI39 / ExPEC).